A 770-amino-acid chain; its full sequence is Semaphorin-4F (770 aa).

The signal sequence occupies residues 1-34; sequence MPASAARPRPGPGQPTASPFPLLLLAVLSGPVSG. Residues 35–659 are Extracellular-facing; the sequence is RVPRSVPRTS…RDAPSRAHTV (625 aa). A Sema domain is found at 42–510; it reads RTSLPISEAD…SRTEVTQVNT (469 aa). An N-linked (GlcNAc...) asparagine glycan is attached at Asn64. Cys112 and Cys122 are joined by a disulfide. A glycan (N-linked (GlcNAc...) asparagine) is linked at Asn133. Disulfide bonds link Cys140/Cys149, Cys273/Cys384, and Cys297/Cys343. N-linked (GlcNAc...) asparagine glycosylation occurs at Asn509. The 52-residue stretch at 512–563 folds into the PSI domain; sequence NCGRLQSCSECILAQDPVCAWSFRLDECVAHAGEHRGLVQDIESADVSSLCP. Intrachain disulfides connect Cys513–Cys530, Cys522–Cys539, and Cys587–Cys628. Positions 580 to 635 constitute an Ig-like C2-type domain; the sequence is AAHVVLPCSPSSAWASCVWHQPSGVTALTPRRDGLEVVVTPGAMGAYACECQEGGA. The chain crosses the membrane as a helical span at residues 660–680; it reads GAGLAGFFLGILAASLTLILI. Residues 681–770 lie on the Cytoplasmic side of the membrane; sequence GRRQQRRRQR…PLATCDETSI (90 aa). A disordered region spans residues 696-725; that stretch reads DKVGLDLGAPPSGTTSYSQDPPSPSPEDER. Residues Ser718 and Ser720 each carry the phosphoserine modification. A PDZ-binding motif is present at residues 768–770; it reads TSI.

The protein belongs to the semaphorin family. In terms of assembly, interacts (via PDZ-binding motif) with DLG4/SAP90 (via PDZ domain 2); this interaction may promote translocation of DLG4/SAP90 to the membrane.

Its subcellular location is the cell membrane. It localises to the postsynaptic density. The protein resides in the perikaryon. It is found in the cell projection. The protein localises to the dendrite. Its function is as follows. Probable cell surface receptor that regulates oligodendroglial precursor cell migration. Might also regulate differentiation of oligodendroglial precursor cells. Has growth cone collapse activity against retinal ganglion-cell axons. In Homo sapiens (Human), this protein is Semaphorin-4F (SEMA4F).